We begin with the raw amino-acid sequence, 276 residues long: Halorhodopsin (276 aa).

The propeptide occupies 1 to 21 (MTAASTTATTMLQATQSDVLQ). The Extracellular segment spans residues 22–25 (EIQS). Residues 26-51 (NFLLNSSIWVNIALAGVVILLFVAMG) traverse the membrane as a helical segment. Residues 52–57 (RDIESP) lie on the Cytoplasmic side of the membrane. The chain crosses the membrane as a helical span at residues 58–81 (RAKLIWVATMLVPLVSISSYAGLA). The Extracellular portion of the chain corresponds to 82 to 105 (SGLTVGFLQMPPGHALAGQEVLSP). A helical membrane pass occupies residues 106-127 (WGRYLTWTFSTPMILLALGLLA). At 128–130 (DTD) the chain is on the cytoplasmic side. The helical transmembrane segment at 131–154 (IASLFTAITMDIGMCVTGLAAALI) threads the bilayer. Residues 155–157 (TSS) lie on the Extracellular side of the membrane. Residues 158–180 (HLLRWVFYGISCAFFVAVLYVLL) traverse the membrane as a helical segment. The Cytoplasmic portion of the chain corresponds to 181–192 (VQWPADAEAAGT). A helical membrane pass occupies residues 193–216 (SEIFGTLKILTVVLWLGYPILWAL). Residues 217–225 (GSEGVALLS) are Extracellular-facing. A helical transmembrane segment spans residues 226 to 254 (VGVTSWGYSGLDILAKYVFAFLLLRWVAA). Lysine 241 carries the post-translational modification N6-(retinylidene)lysine. Topologically, residues 255 to 276 (NEGAVSGSGMSIGSGGAAPADD) are cytoplasmic.

It belongs to the archaeal/bacterial/fungal opsin family.

It localises to the cell membrane. Functionally, light-driven chloride pump. The protein is Halorhodopsin (hop) of Halobacterium halobium (strain port).